We begin with the raw amino-acid sequence, 148 residues long: Large ribosomal subunit protein bL9 (148 aa).

The protein belongs to the bacterial ribosomal protein bL9 family.

In terms of biological role, binds to the 23S rRNA. This Caldicellulosiruptor bescii (strain ATCC BAA-1888 / DSM 6725 / KCTC 15123 / Z-1320) (Anaerocellum thermophilum) protein is Large ribosomal subunit protein bL9.